The primary structure comprises 157 residues: 2-C-methyl-D-erythritol 2,4-cyclodiphosphate synthase (157 aa).

A divalent metal cation-binding residues include aspartate 9 and histidine 11. Residues 9–11 (DVH) and 35–36 (HS) contribute to the 4-CDP-2-C-methyl-D-erythritol 2-phosphate site. Histidine 43 is a binding site for a divalent metal cation. Residues 57–59 (DIG), 62–66 (FPDTD), 101–107 (AEKPKMA), 133–136 (TTTE), phenylalanine 140, and arginine 143 each bind 4-CDP-2-C-methyl-D-erythritol 2-phosphate.

It belongs to the IspF family. As to quaternary structure, homotrimer. Requires a divalent metal cation as cofactor.

It catalyses the reaction 4-CDP-2-C-methyl-D-erythritol 2-phosphate = 2-C-methyl-D-erythritol 2,4-cyclic diphosphate + CMP. It participates in isoprenoid biosynthesis; isopentenyl diphosphate biosynthesis via DXP pathway; isopentenyl diphosphate from 1-deoxy-D-xylulose 5-phosphate: step 4/6. Its function is as follows. Involved in the biosynthesis of isopentenyl diphosphate (IPP) and dimethylallyl diphosphate (DMAPP), two major building blocks of isoprenoid compounds. Catalyzes the conversion of 4-diphosphocytidyl-2-C-methyl-D-erythritol 2-phosphate (CDP-ME2P) to 2-C-methyl-D-erythritol 2,4-cyclodiphosphate (ME-CPP) with a corresponding release of cytidine 5-monophosphate (CMP). In Listeria monocytogenes serotype 4b (strain CLIP80459), this protein is 2-C-methyl-D-erythritol 2,4-cyclodiphosphate synthase.